We begin with the raw amino-acid sequence, 472 residues long: ATP synthase subunit beta (472 aa).

ATP is bound at residue 157-164 (GGAGVGKT).

This sequence belongs to the ATPase alpha/beta chains family. As to quaternary structure, F-type ATPases have 2 components, CF(1) - the catalytic core - and CF(0) - the membrane proton channel. CF(1) has five subunits: alpha(3), beta(3), gamma(1), delta(1), epsilon(1). CF(0) has three main subunits: a(1), b(2) and c(9-12). The alpha and beta chains form an alternating ring which encloses part of the gamma chain. CF(1) is attached to CF(0) by a central stalk formed by the gamma and epsilon chains, while a peripheral stalk is formed by the delta and b chains.

It is found in the cell inner membrane. The enzyme catalyses ATP + H2O + 4 H(+)(in) = ADP + phosphate + 5 H(+)(out). Produces ATP from ADP in the presence of a proton gradient across the membrane. The catalytic sites are hosted primarily by the beta subunits. The polypeptide is ATP synthase subunit beta (Desulfatibacillum aliphaticivorans).